A 798-amino-acid chain; its full sequence is Ubiquitin carboxyl-terminal hydrolase 10 (798 aa).

The residue at position 2 (Ala-2) is an N-acetylalanine. The tract at residues 2-100 (ALHSPQYIFG…ILGCTASKIT (99 aa)) is interaction with p53/TP53. The interval 6 to 21 (PQYIFGDFSPDEFNQF) is G3BP1-binding. Thr-24 is modified (phosphothreonine). Thr-42 carries the phosphothreonine; by ATM modification. Thr-100 carries the phosphothreonine modification. Disordered regions lie at residues 139-166 (GVSG…LKDG), 194-257 (AEFM…CFPA), and 307-337 (TESI…LPVS). Residues 205-219 (TPRTCNSPQNSTDSV) are compositionally biased toward polar residues. A phosphoserine mark is found at Ser-211 and Ser-226. The segment covering 307-316 (TESIDLDPTK) has biased composition (basic and acidic residues). Ser-321 carries the post-translational modification Phosphoserine. The segment covering 328 to 337 (GSASGTLPVS) has biased composition (polar residues). Ser-337 is modified (phosphoserine; by ATM). A phosphoserine mark is found at Ser-365 and Ser-370. The 381-residue stretch at 415–795 (RGLINKGNWC…TAYLLYYRRV (381 aa)) folds into the USP domain. Cys-424 functions as the Nucleophile in the catalytic mechanism. Ser-547 carries the post-translational modification Phosphoserine. Residues 551–562 (EKLTISNGPKNH) are compositionally biased toward polar residues. Residues 551–594 (EKLTISNGPKNHSVNEEEQEEQGEGSEDEWEQVGPRNKTSVTRQ) form a disordered region. Ser-563 and Ser-576 each carry phosphoserine. Over residues 566-581 (EEEQEEQGEGSEDEWE) the composition is skewed to acidic residues. His-749 (proton acceptor) is an active-site residue.

The protein belongs to the peptidase C19 family. USP10 subfamily. In terms of assembly, found in a deubiquitination complex with TANK, USP10 and ZC3H12A; this complex inhibits genotoxic stress- or interleukin-1-beta (IL1B)-mediated NF-kappa-B activation by promoting IKBKG or TRAF6 deubiquitination. Interacts with IKBKG; this interaction increases in response to DNA damage. Interacts with TANK; this interaction increases in response to DNA damage. Interacts with TRAF6; this interaction increases in response to DNA damage. Interacts with ZC3H12A; this interaction increases in response to DNA damage. Interacts with G3BP1 (via NTF2 domain) and G3BP2 (via NTF2 domain); inhibiting stress granule formation. In terms of processing, phosphorylated by ATM following DNA damage, leading to stabilization and translocation it to the nucleus. Post-translationally, ubiquitinated. Deubiquitinated by USP13. In terms of tissue distribution, widely expressed.

Its subcellular location is the cytoplasm. It localises to the nucleus. The protein resides in the early endosome. The catalysed reaction is Thiol-dependent hydrolysis of ester, thioester, amide, peptide and isopeptide bonds formed by the C-terminal Gly of ubiquitin (a 76-residue protein attached to proteins as an intracellular targeting signal).. With respect to regulation, specifically inhibited by spautin-1 (specific and potent autophagy inhibitor-1), a derivative of MBCQ that binds to USP10 and inhibits deubiquitinase activity. Regulated by PIK3C3/VPS34-containing complexes. Hydrolase that can remove conjugated ubiquitin from target proteins such as p53/TP53, RPS2/us5, RPS3/us3, RPS10/eS10, BECN1, SNX3 and CFTR. Acts as an essential regulator of p53/TP53 stability: in unstressed cells, specifically deubiquitinates p53/TP53 in the cytoplasm, leading to counteract MDM2 action and stabilize p53/TP53. Following DNA damage, translocates to the nucleus and deubiquitinates p53/TP53, leading to regulate the p53/TP53-dependent DNA damage response. Component of a regulatory loop that controls autophagy and p53/TP53 levels: mediates deubiquitination of BECN1, a key regulator of autophagy, leading to stabilize the PIK3C3/VPS34-containing complexes. In turn, PIK3C3/VPS34-containing complexes regulate USP10 stability, suggesting the existence of a regulatory system by which PIK3C3/VPS34-containing complexes regulate p53/TP53 protein levels via USP10 and USP13. Does not deubiquitinate MDM2. Plays a key role in 40S ribosome subunit recycling when a ribosome has stalled during translation: acts both by inhibiting formation of stress granules, which store stalled translation pre-initiation complexes, and mediating deubiquitination of 40S ribosome subunits. Acts as a negative regulator of stress granules formation by lowering G3BP1 and G3BP2 valence, thereby preventing G3BP1 and G3BP2 ability to undergo liquid-liquid phase separation (LLPS) and assembly of stress granules. Promotes 40S ribosome subunit recycling following ribosome dissociation in response to ribosome stalling by mediating deubiquitination of 40S ribosomal proteins RPS2/us5, RPS3/us3 and RPS10/eS10, thereby preventing their degradation by the proteasome. Part of a ribosome quality control that takes place when ribosomes have stalled during translation initiation (iRQC): USP10 acts by removing monoubiquitination of RPS2/us5 and RPS3/us3, promoting 40S ribosomal subunit recycling. Deubiquitinates CFTR in early endosomes, enhancing its endocytic recycling. Involved in a TANK-dependent negative feedback response to attenuate NF-kappa-B activation via deubiquitinating IKBKG or TRAF6 in response to interleukin-1-beta (IL1B) stimulation or upon DNA damage. Deubiquitinates TBX21 leading to its stabilization. Plays a negative role in the RLR signaling pathway upon RNA virus infection by blocking the RIGI-mediated MAVS activation. Mechanistically, removes the unanchored 'Lys-63'-linked polyubiquitin chains of MAVS to inhibit its aggregation, essential for its activation. The protein is Ubiquitin carboxyl-terminal hydrolase 10 of Homo sapiens (Human).